Reading from the N-terminus, the 340-residue chain is Tetraacyldisaccharide 4'-kinase (340 aa).

47–54 (SVGGTGKT) contributes to the ATP binding site.

This sequence belongs to the LpxK family.

The enzyme catalyses a lipid A disaccharide + ATP = a lipid IVA + ADP + H(+). It functions in the pathway glycolipid biosynthesis; lipid IV(A) biosynthesis; lipid IV(A) from (3R)-3-hydroxytetradecanoyl-[acyl-carrier-protein] and UDP-N-acetyl-alpha-D-glucosamine: step 6/6. Its function is as follows. Transfers the gamma-phosphate of ATP to the 4'-position of a tetraacyldisaccharide 1-phosphate intermediate (termed DS-1-P) to form tetraacyldisaccharide 1,4'-bis-phosphate (lipid IVA). The protein is Tetraacyldisaccharide 4'-kinase of Flavobacterium johnsoniae (strain ATCC 17061 / DSM 2064 / JCM 8514 / BCRC 14874 / CCUG 350202 / NBRC 14942 / NCIMB 11054 / UW101) (Cytophaga johnsonae).